The chain runs to 396 residues: 3-amino-4-hydroxybenzoic acid synthase (396 aa).

The disordered stretch occupies residues 1–29 (MSSSPSPSPSSSSSSSASSSASSSPSSSS).

It belongs to the archaeal-type DHQ synthase family. GriH subfamily. As to quaternary structure, monomer. Mn(2+) serves as cofactor.

The catalysed reaction is 2-amino-4,5-dihydroxy-6-oxo-7-(phosphooxy)heptanoate = 3-amino-4-hydroxybenzoate + phosphate + 2 H2O + H(+). Functionally, catalyzes the cyclization of 2-amino-4,5-dihydroxy-6-one-heptanoic acid-7-phosphate to yield 3-amino-4-hydroxybenzoic acid (3,4-AHBA). The sequence is that of 3-amino-4-hydroxybenzoic acid synthase (griH) from Streptomyces griseus subsp. griseus (strain JCM 4626 / CBS 651.72 / NBRC 13350 / KCC S-0626 / ISP 5235).